The chain runs to 3033 residues: Genome polyprotein (3033 aa).

Residue S2 is modified to N-acetylserine; by host. Residues 2 to 23 (STNPKPQRKTKRNTNRRPQDVK) form an interaction with STAT1 region. The interval 2–58 (STNPKPQRKTKRNTNRRPQDVKFPGGGQIVGGVYLLPRRGPRLGVRATRKTSERSQP) is interaction with EIF2AK2/PKR. Positions 2 to 59 (STNPKPQRKTKRNTNRRPQDVKFPGGGQIVGGVYLLPRRGPRLGVRATRKTSERSQPR) are interaction with DDX3X. The segment at 2–75 (STNPKPQRKT…PKDRRSTGKS (74 aa)) is disordered. Over 2–168 (STNPKPQRKT…EDGVNFATGN (167 aa)) the chain is Cytoplasmic. Short sequence motifs (nuclear localization signal) lie at residues 5-13 (PKPQRKTKR) and 38-43 (PRRGPR). Residues 7–16 (PQRKTKRNTN) show a composition bias toward basic residues. Over residues 32–47 (GGVYLLPRRGPRLGVR) the composition is skewed to low complexity. S53 carries the post-translational modification Phosphoserine; by host. Short sequence motifs (nuclear localization signal) lie at residues 58–64 (PRGRRQP) and 66–71 (PKDRRS). S99 is subject to Phosphoserine; by host. Positions 112–152 (PRHRSRNVGKVIDTLTCGFADLMGYIPVVGAPLGGVARALA) are important for endoplasmic reticulum and mitochondrial localization. At S116 the chain carries Phosphoserine; by host PKA. An interaction with APOA2 region spans residues 122–173 (VIDTLTCGFADLMGYIPVVGAPLGGVARALAHGVRVLEDGVNFATGNLPGCS). Positions 164–167 (FATG) are important for lipid droplets localization. The helical transmembrane segment at 169–189 (LPGCSFSIFLLALLSCITTPV) threads the bilayer. The propeptide at 178-191 (LLALLSCITTPVSA) is ER anchor for the core protein, removed in mature form by host signal peptidase. The Lumenal segment spans residues 190-358 (SAAEVKNIST…GGAHWGVMFG (169 aa)). 3 N-linked (GlcNAc...) asparagine; by host glycosylation sites follow: N196, N209, and N234. The interval 265–296 (VVMSATLCSALYVGDLCGGVMLAAQMFIVSPQ) is important for fusion. N-linked (GlcNAc...) asparagine; by host glycosylation occurs at N305. The chain crosses the membrane as a helical span at residues 359 to 379 (LAYFSMQGAWAKVVVILLLAA). Residues 380–729 (GVDAQTHTVG…WEWVVLLFLL (350 aa)) lie on the Lumenal side of the membrane. The segment at 385–411 (THTVGGSTAHNARTLTGMFSLGARQKI) is HVR1. N-linked (GlcNAc...) (high mannose) asparagine; by host glycosylation is found at N417, N423, N430, and N448. Cystine bridges form between C429-C554, C452-C459, C488-C496, and C505-C510. The N-linked (GlcNAc...) (high mannose) asparagine; by host glycan is linked to N477. The CD81-binding 1 stretch occupies residues 484–496 (MRPYCWHYPPRQC). The CD81-binding 2 stretch occupies residues 524-555 (LGAPTYTWGENETDVFLLNSTRPPQGSWFGCT). 3 N-linked (GlcNAc...) (high mannose) asparagine; by host glycosylation sites follow: N534, N542, and N558. An intrachain disulfide couples C566 to C571. N578 carries N-linked (GlcNAc...) (high mannose) asparagine; by host glycosylation. Disulfide bonds link C585–C589, C601–C624, and C611–C648. 2 N-linked (GlcNAc...) (high mannose) asparagine; by host glycosylation sites follow: N627 and N649. Residues C656 and C681 are joined by a disulfide bond. Positions 664–675 (SQLSPLLHSTTE) are EIF2AK2/eIF2-alpha phosphorylation homology domain (PePHD). The chain crosses the membrane as a helical span at residues 730 to 750 (LADARVCACLWMLILLGQAEA). Residues 751 to 761 (ALEKLVVLHAA) are Lumenal-facing. The helical transmembrane segment at 762–782 (SAASCNGFLYFVIFFVAAWYI) threads the bilayer. Topologically, residues 783–786 (KGRV) are cytoplasmic. Residues 787 to 807 (VPLATYSLTGLWSFGLLLLAL) traverse the membrane as a helical segment. At 808–817 (PQQAYAYDAS) the chain is on the lumenal side. Residues 818–838 (VHGQIGAALLVLITLFTLTPG) form a helical membrane-spanning segment. At 839–885 (YKTLLSRFLWWLCYLLTLAEAMVQEWAPPMQVRGGRDGIIWAVAIFC) the chain is on the cytoplasmic side. The helical transmembrane segment at 886–906 (PGVVFDITKWLLAVLGPAYLL) threads the bilayer. Residues 907-932 (KGALTRVPYFVRAHALLRMCTMVRHL) are Lumenal-facing. Residues 907–1030 (KGALTRVPYF…GYTSKGWSLL (124 aa)) enclose the Peptidase C18 domain. The tract at residues 908-1210 (GALTRVPYFV…PVETLDIVTR (303 aa)) is protease NS2-3. C926 is lipidated: S-palmitoyl cysteine; by host. The helical transmembrane segment at 933 to 953 (AGGRYVQMVLLALGRWTGTYI) threads the bilayer. The tract at residues 933–953 (AGGRYVQMVLLALGRWTGTYI) is interaction with host SCPS1. The Cytoplasmic portion of the chain corresponds to 954 to 1661 (YDHLTPMSDW…CMQADLEVMT (708 aa)). Catalysis depends on for protease NS2 activity; shared with dimeric partner residues H956, E976, and C997. The Peptidase S29 domain occupies 1031–1212 (APITAYAQQT…ETLDIVTRSP (182 aa)). Catalysis depends on charge relay system; for serine protease NS3 activity residues H1087 and D1111. Zn(2+) contacts are provided by C1127 and C1129. S1169 acts as the Charge relay system; for serine protease NS3 activity in catalysis. Zn(2+) is bound by residues C1175 and H1179. Residues 1221–1373 (PAVPQTYQVG…PNIEEVALGQ (153 aa)) enclose the Helicase ATP-binding domain. 1234 to 1241 (APTGSGKS) is a binding site for ATP. S1241 and E1321 together coordinate Mg(2+). Positions 1320-1323 (DECH) match the DECH box motif. The interval 1490–1501 (QRRGRTGRGRLG) is RNA-binding. The helical transmembrane segment at 1662–1682 (STWVLAGGVLAAVAAYCLATG) threads the bilayer. Residues 1683–1694 (CVCIIGRLHVNQ) form an NS3-binding region. Residues 1683–1809 (CVCIIGRLHV…ALTSPLSTST (127 aa)) lie on the Cytoplasmic side of the membrane. A helical transmembrane segment spans residues 1810–1830 (TILLNILGGWLASQIAPPAGA). Topologically, residues 1831–1832 (TG) are lumenal. The helical transmembrane segment at 1833-1853 (FVVSGLVGAAVGSIGLGKVLV) threads the bilayer. Residues 1837-1865 (GLVGAAVGSIGLGKVLVDILAGYGAGISG) form a glycine zipper region. D1854 is a topological domain (cytoplasmic). A helical membrane pass occupies residues 1855 to 1875 (ILAGYGAGISGALVAFKIMSG). Residues 1876–1885 (EKPSMEDVVN) lie on the Lumenal side of the membrane. A helical transmembrane segment spans residues 1886–1906 (LLPGILSPGALVVGVICAAIL). Residues 1907–1976 (RRHVGPGEGA…WITEDCPIPC (70 aa)) lie on the Cytoplasmic side of the membrane. C1972 carries the S-palmitoyl cysteine; by host lipid modification. A lipid anchor (S-palmitoyl cysteine; by host; partial) is attached at C1976. Residues 1977–2007 (SGSWLRDVWDWVCTILTDFKNWLTSKLFPKM) lie within the membrane without spanning it. The interval 1982–2002 (RDVWDWVCTILTDFKNWLTSK) is membrane-binding. Over 2008 to 3012 (PGLPFISCQK…YHSVSRARPR (1005 aa)) the chain is Cytoplasmic. The interval 2009–2225 (GLPFISCQKG…RATCTTHGKA (217 aa)) is RNA-binding. Positions 2015, 2033, 2035, and 2056 each coordinate Zn(2+). Y2069 bears the Phosphotyrosine; by host mark. The tract at residues 2124–2212 (EFFSWVDGVQ…ASSSASQLSA (89 aa)) is FKBP8-binding. Residues 2124–2332 (EFFSWVDGVQ…PTPPPRRRRT (209 aa)) form a transcriptional activation region. The interaction with non-structural protein 4A stretch occupies residues 2139-2143 (PIPKP). 2 disordered regions span residues 2193-2214 (RLARGSPPSEASSSASQLSAPS) and 2309-2335 (ATVAGCALPPPKKTPTPPPRRRRTVGL). S2198 carries the phosphoserine; by host; in p56 modification. Low complexity predominate over residues 2198–2214 (SPPSEASSSASQLSAPS). The residue at position 2201 (S2201) is a Phosphoserine; by host; in p58. S2205 carries the phosphoserine; by host; in p56 and p58, regulates intracellular NS5A distribution modification. Phosphoserine; by host; in p58 is present on residues S2208, S2211, and S2214. The tract at residues 2210-2249 (LSAPSLRATCTTHGKAYDVDMVDANLFMGGDVTRIESESK) is ISDR. An interaction with EIF2AK2/PKR region spans residues 2214-2275 (SLRATCTTHG…LEPSIPSEYM (62 aa)). The NS4B-binding stretch occupies residues 2253–2310 (LDSLDPMVEERSDLEPSIPSEYMLPKKRFPPALPAWARPDYNPPLVESWKRPDYQPAT). The span at 2316–2326 (LPPPKKTPTPP) shows a compositional bias: pro residues. The SH3-binding motif lies at 2322–2325 (TPTP). Position 2324 is a phosphothreonine; by host (T2324). Positions 2326 to 2334 (PPRRRRTVG) match the Nuclear localization signal motif. Residues 2336–2447 (SESSIADALQ…SVVCCSMSYS (112 aa)) form an interaction with host IFI27 region. A Glycyl lysine isopeptide (Lys-Gly) (interchain with G-Cter in ubiquitin) cross-link involves residue K2350. The disordered stretch occupies residues 2351–2431 (SFGQPPPSGD…PGSGSGSWST (81 aa)). Positions 2358–2381 (SGDSGLSTGADAADSGSRTPPDEL) are V3. A compositionally biased stretch (acidic residues) spans 2398-2408 (EPGDPDLEPEQ). Over residues 2417 to 2431 (GGVVTPGSGSGSWST) the composition is skewed to low complexity. In terms of domain architecture, RdRp catalytic spans 2656 to 2774 (PMGFSYDTRC…ISESQGTEED (119 aa)). 3 residues coordinate Mg(2+): D2662, D2760, and D2761. Residues 3013–3033 (LLLLGLLLLFVGVGLFLLPAR) form a helical membrane-spanning segment.

The protein belongs to the hepacivirus polyprotein family. As to quaternary structure, homooligomer. Interacts with E1 (via C-terminus). Interacts with the non-structural protein 5A. Interacts (via N-terminus) with host STAT1 (via SH2 domain); this interaction results in decreased STAT1 phosphorylation and ubiquitin-mediated proteasome-dependent STAT1 degradation, leading to decreased IFN-stimulated gene transcription. Interacts with host STAT3; this interaction constitutively activates STAT3. Interacts with host LTBR receptor. Interacts with host TNFRSF1A receptor and possibly induces apoptosis. Interacts with host HNRPK. Interacts with host YWHAE. Interacts with host UBE3A/E6AP. Interacts with host DDX3X. Interacts with host APOA2. Interacts with host RXRA protein. Interacts with host SP110 isoform 3/Sp110b; this interaction sequesters the transcriptional corepressor SP110 away from the nucleus. Interacts with host CREB3 nuclear transcription protein; this interaction triggers cell transformation. Interacts with host ACY3. Interacts with host C1QR1. Interacts with host RBM24; this interaction, which enhances the interaction of the mature core protein with 5'-UTR, may inhibit viral translation and favor replication. Interacts with host EIF2AK2/PKR; this interaction induces the autophosphorylation of EIF2AK2. Part of the viral assembly initiation complex composed of NS2, E1, E2, NS3, NS4A, NS5A and the mature core protein. Forms a heterodimer with envelope glycoprotein E2. Interacts with mature core protein. Interacts with protease NS2. The heterodimer E1/E2 interacts with host CLDN1; this interaction plays a role in viral entry into host cell. Interacts with host SPSB2 (via C-terminus). Part of the viral assembly initiation complex composed of NS2, E1, E2, NS3, NS4A, NS5A and the mature core protein. Interacts with host NEURL3; this interaction prevents E1 binding to glycoprotein E2. In terms of assembly, forms a heterodimer with envelope glycoprotein E1. Interacts with host CD81 and SCARB1 receptors; this interaction may play a role in viral entry into host cell. Interacts with host EIF2AK2/PKR; this interaction inhibits EIF2AK2 and probably allows the virus to evade the innate immune response. Interacts with host CD209/DC-SIGN and CLEC4M/DC-SIGNR. Interact with host SPCS1; this interaction is essential for viral particle assembly. Interacts with protease NS2. The heterodimer E1/E2 interacts with host CLDN1; this interaction plays a role in viral entry into host cell. Part of the viral assembly initiation complex composed of NS2, E1, E2, NS3, NS4A, NS5A and the mature core protein. Interacts with host SLC3A2/4F2hc; the interaction may facilitate viral entry into host cell. Interacts with human PLSCR1. As to quaternary structure, homohexamer. Homoheptamer. Interacts with protease NS2. Homodimer. Interacts with host SPCS1; this interaction is essential for viral particle assembly. Interacts with envelope glycoprotein E1. Interacts with envelope glycoprotein E2. Interacts with viroporin p7. Interacts with serine protease/helicase NS3. Part of the replication complex composed of NS2, NS3, NS4A, NS4B, NS5A and the RNA-directed RNA polymerase embedded in an ER-derived membranous web. Part of the viral assembly initiation complex composed of NS2, E1, E2, NS3, NS4A, NS5A and the mature core protein. In terms of assembly, interacts with protease NS2. Interacts with non-structural protein 4A; this interaction stabilizes the folding of NS3 serine protease. NS3-NS4A interaction is essential for NS3 activation and allows membrane anchorage of the latter. NS3/NS4A complex also prevents phosphorylation of host IRF3, thus preventing the establishment of dsRNA induced antiviral state. Interacts with host MAVS; this interaction leads to the cleavage and inhibition of host MAVS. Interacts with host TICAM1; this interaction leads to the cleavage and inhibition of host TICAM1. Interacts with host TANK-binding kinase/TBK1; this interaction results in the inhibition of the association between TBK1 and IRF3, which leads to the inhibition of IRF3 activation. Interacts with host RBM24. Part of the replication complex composed of NS2, NS3, NS4A, NS4B, NS5A and the RNA-directed RNA polymerase embedded in an ER-derived membranous web. Part of the viral assembly initiation complex composed of NS2, E1, E2, NS3, NS4A, NS5A and the mature core protein. As to quaternary structure, interacts with NS3 serine protease; this interaction stabilizes the folding of NS3 serine protease. NS3-NS4A interaction is essential for NS3 activation and allows membrane anchorage of the latter. Interacts with non-structural protein 5A (via N-terminus). Part of the replication complex composed of NS2, NS3, NS4A, NS4B, NS5A and the RNA-directed RNA polymerase embedded in an ER-derived membranous web. Part of the viral assembly initiation complex composed of NS2, E1, E2, NS3, NS4A, NS5A and the mature core protein. Homomultimer. Interacts with non-structural protein NS5A. Interacts with host PLA2G4C; this interaction likely initiates the recruitment of replication complexes to lipid droplets. Interacts with host STING; this interaction disrupts the interaction between STING and TBK1 thereby suppressing the interferon signaling. Part of the replication complex composed of NS2, NS3, NS4A, NS4B, NS5A and the RNA-directed RNA polymerase embedded in an ER-derived membranous web. In terms of assembly, monomer. Homodimer; dimerization is required for RNA-binding. Interacts with the mature core protein. Interacts (via N-terminus) with non-structural protein 4A. Interacts with non-structural protein 4B. Interacts (via region D2) with RNA-directed RNA polymerase. Part of the viral assembly initiation complex composed of NS2, E1, E2, NS3, NS4A, NS5A and the mature core protein. Part of the replication complex composed of NS2, NS3, NS4A, NS4B, NS5A and the RNA-directed RNA polymerase embedded in an ER-derived membranous web. Interacts with host GRB2. Interacts with host BIN1. Interacts with host PIK3R1. Interacts with host SRCAP. Interacts with host FKBP8. Interacts (via C-terminus) with host VAPB (via MSP domain). Interacts with host EIF2AK2/PKR; this interaction leads to disruption of EIF2AK2 dimerization by NS5A and probably allows the virus to evade the innate immune response. Interacts (via N-terminus) with host PACSIN2 (via N-terminus); this interaction attenuates protein kinase C alpha-mediated phosphorylation of PACSIN2 by disrupting the interaction between PACSIN2 and PRKCA. Interacts (via N-terminus) with host SRC kinase (via SH2 domain). Interacts with most Src-family kinases. Interacts with host IFI27 and SKP2; promotes the ubiquitin-mediated proteasomal degradation of NS5A. Interacts with host GPS2. Interacts with host TNFRSF21; this interaction allows the modulation by the virus of JNK, p38 MAPK, STAT3, and Akt signaling pathways in a DR6-dependent manner. Interacts (via N-terminus) with host CIDEB (via N-terminus); this interaction seems to regulate the association of HCV particles with APOE. Interacts with host CHKA/Choline Kinase-alpha; CHKA bridges host PI4KA and NS5A and potentiates NS5A-stimulated PI4KA activity, which then facilitates the targeting of the ternary complex to the ER for viral replication. Interacts with host SPSB2 (via C-terminus); this interaction targets NS5A for ubiquitination and degradation. Interacts with host RAB18; this interaction may promote the association of NS5A and other replicase components with lipid droplets. Interacts (via region D2) with host PPIA/CYPA; the interaction stimulates RNA-binding ability of NS5A and is dependent on the peptidyl-prolyl cis-trans isomerase activity of PPIA/CYPA. Interacts with host TRIM14; this interaction induces the degradation of NS5A. As to quaternary structure, homooligomer. Interacts with non-structural protein 5A. Interacts with host VAPB. Interacts with host PRK2/PKN2. Interacts with host HNRNPA1 and SEPT6; these interactions facilitate viral replication. Part of the replication complex composed of NS2, NS3, NS4A, NS4B, NS5A and the RNA-directed RNA polymerase. It depends on Zn(2+) as a cofactor. The cofactor is Mg(2+). Post-translationally, specific enzymatic cleavages in vivo yield mature proteins. The structural proteins, core, E1, E2 and p7 are produced by proteolytic processing by host signal peptidases. The core protein precursor is synthesized as a 23 kDa, which is retained in the ER membrane through the hydrophobic signal peptide. Cleavage by the signal peptidase releases the 21 kDa mature core protein. The cleavage of the core protein precursor occurs between aminoacids 176 and 188 but the exact cleavage site is not known. Some degraded forms of the core protein appear as well during the course of infection. The other proteins (p7, NS2, NS3, NS4A, NS4B, NS5A and NS5B) are cleaved by the viral proteases. Autoprocessing between NS2 and NS3 is mediated by the NS2 cysteine protease catalytic domain and regulated by the NS3 N-terminal domain. Phosphorylated by host PKC and PKA. In terms of processing, ubiquitinated; mediated by UBE3A and leading to core protein subsequent proteasomal degradation. Post-translationally, highly N-glycosylated. Palmitoylation is required for NS2/3 autoprocessing and E2 recruitment to membranes. In terms of processing, palmitoylated. This modification may play a role in its polymerization or in protein-protein interactions. Post-translationally, phosphorylated on serines in a basal form termed p56. p58 is a hyperphosphorylated form of p56. p56 and p58 coexist in the cell in roughly equivalent amounts. Hyperphosphorylation is dependent on the presence of NS4A. Host CSNK1A1/CKI-alpha or RPS6KB1 kinases may be responsible for NS5A phosphorylation. Tyrosine phosphorylation is essential for the interaction with host SRC. In terms of processing, the N-terminus is phosphorylated by host PRK2/PKN2.

It is found in the host endoplasmic reticulum membrane. The protein resides in the host mitochondrion membrane. It localises to the virion. The protein localises to the host cytoplasm. Its subcellular location is the host nucleus. It is found in the host lipid droplet. The protein resides in the virion membrane. It localises to the host mitochondrion. The protein localises to the host cell membrane. Its subcellular location is the host perinuclear region. The enzyme catalyses Hydrolysis of four peptide bonds in the viral precursor polyprotein, commonly with Asp or Glu in the P6 position, Cys or Thr in P1 and Ser or Ala in P1'.. It carries out the reaction a ribonucleoside 5'-triphosphate + H2O = a ribonucleoside 5'-diphosphate + phosphate + H(+). It catalyses the reaction ATP + H2O = ADP + phosphate + H(+). The catalysed reaction is RNA(n) + a ribonucleoside 5'-triphosphate = RNA(n+1) + diphosphate. Inhibited by the antiviral drug hexamethylene amiloride. Inhibition by amantadine appears to be genotype-dependent. Also inhibited by long-alkyl-chain iminosugar derivatives. Its activity is regulated as follows. Activity is up-regulated by PRK2/PKN2-mediated phosphorylation. Packages viral RNA to form a viral nucleocapsid, and promotes virion budding. Participates in the viral particle production as a result of its interaction with the non-structural protein 5A. Binds RNA and may function as a RNA chaperone to induce the RNA structural rearrangements taking place during virus replication. Modulates viral translation initiation by interacting with viral IRES and 40S ribosomal subunit. Affects various cell signaling pathways, host immunity and lipid metabolism. Prevents the establishment of cellular antiviral state by blocking the interferon-alpha/beta (IFN-alpha/beta) and IFN-gamma signaling pathways and by blocking the formation of phosphorylated STAT1 and promoting ubiquitin-mediated proteasome-dependent degradation of STAT1. Activates STAT3 leading to cellular transformation. Regulates the activity of cellular genes, including c-myc and c-fos. May repress the promoter of p53, and sequester CREB3 and SP110 isoform 3/Sp110b in the cytoplasm. Represses cell cycle negative regulating factor CDKN1A, thereby interrupting an important check point of normal cell cycle regulation. Targets transcription factors involved in the regulation of inflammatory responses and in the immune response: suppresses TNF-induced NF-kappa-B activation, and activates AP-1. Binds to dendritic cells (DCs) via C1QR1, resulting in down-regulation of T-lymphocytes proliferation. Alters lipid metabolism by interacting with hepatocellular proteins involved in lipid accumulation and storage. Induces up-regulation of FAS promoter activity, and thereby contributes to the increased triglyceride accumulation in hepatocytes (steatosis). In terms of biological role, forms a heterodimer with envelope glycoprotein E2, which mediates virus attachment to the host cell, virion internalization through clathrin-dependent endocytosis and fusion with host membrane. Fusion with the host cell is most likely mediated by both E1 and E2, through conformational rearrangements of the heterodimer required for fusion rather than a classical class II fusion mechanism. E1/E2 heterodimer binds host apolipoproteins such as APOB and APOE thereby forming a lipo-viro-particle (LVP). APOE associated to the LVP allows the initial virus attachment to cell surface receptors such as the heparan sulfate proteoglycans (HSPGs), syndecan-1 (SDC1), syndecan-1 (SDC2), the low-density lipoprotein receptor (LDLR) and scavenger receptor class B type I (SCARB1). The cholesterol transfer activity of SCARB1 allows E2 exposure and binding of E2 to SCARB1 and the tetraspanin CD81. E1/E2 heterodimer binding on CD81 activates the epithelial growth factor receptor (EGFR) signaling pathway. Diffusion of the complex E1-E2-EGFR-SCARB1-CD81 to the cell lateral membrane allows further interaction with Claudin 1 (CLDN1) and occludin (OCLN) to finally trigger HCV entry. Its function is as follows. Forms a heterodimer with envelope glycoprotein E1, which mediates virus attachment to the host cell, virion internalization through clathrin-dependent endocytosis and fusion with host membrane. Fusion with the host cell is most likely mediated by both E1 and E2, through conformational rearrangements of the heterodimer required for fusion rather than a classical class II fusion mechanism. The interaction between envelope glycoprotein E2 and host apolipoprotein E/APOE allows the proper assembly, maturation and infectivity of the viral particles. This interaction is probably promoted via the up-regulation of cellular autophagy by the virus. E1/E2 heterodimer binds host apolipoproteins such as APOB and APOE thereby forming a lipo-viro-particle (LVP). APOE associated to the LVP allows the initial virus attachment to cell surface receptors such as the heparan sulfate proteoglycans (HSPGs), syndecan-1 (SDC1), syndecan-1 (SDC2), the low-density lipoprotein receptor (LDLR) and scavenger receptor class B type I (SCARB1). The cholesterol transfer activity of SCARB1 allows E2 exposure and binding of E2 to SCARB1 and the tetraspanin CD81. E1/E2 heterodimer binding on CD81 activates the epithelial growth factor receptor (EGFR) signaling pathway. Diffusion of the complex E1-E2-EGFR-SCARB1-CD81 to the cell lateral membrane allows further interaction with Claudin 1 (CLDN1) and occludin (OCLN) to finally trigger HCV entry. Inhibits host EIF2AK2/PKR activation, preventing the establishment of an antiviral state. Viral ligand for CD209/DC-SIGN and CLEC4M/DC-SIGNR, which are respectively found on dendritic cells (DCs), and on liver sinusoidal endothelial cells and macrophage-like cells of lymph node sinuses. These interactions allow the capture of circulating HCV particles by these cells and subsequent facilitated transmission to permissive cells such as hepatocytes and lymphocyte subpopulations. The interaction between E2 and host amino acid transporter complex formed by SLC3A2 and SLC7A5/LAT1 may facilitate viral entry into host cell. Functionally, ion channel protein that acts as a viroporin and plays an essential role in the assembly, envelopment and secretion of viral particles. Regulates the host cell secretory pathway, which induces the intracellular retention of viral glycoproteins and favors assembly of viral particles. Creates a pore in acidic organelles and releases Ca(2+) and H(+) in the cytoplasm of infected cells, leading to a productive viral infection. High levels of cytoplasmic Ca(2+) may trigger membrane trafficking and transport of viral ER-associated proteins to viroplasms, sites of viral genome replication. This ionic imbalance induces the assembly of the inflammasome complex, which triggers the maturation of pro-IL-1beta into IL-1beta through the action of caspase-1. Targets also host mitochondria and induces mitochondrial depolarization. In addition of its role as a viroporin, acts as a lipid raft adhesion factor. Cysteine protease required for the proteolytic auto-cleavage between the non-structural proteins NS2 and NS3. The N-terminus of NS3 is required for the function of NS2 protease (active region NS2-3). Promotes the initiation of viral particle assembly by mediating the interaction between structural and non-structural proteins. In terms of biological role, displays three enzymatic activities: serine protease with a chymotrypsin-like fold, NTPase and RNA helicase. NS3 serine protease, in association with NS4A, is responsible for the cleavages of NS3-NS4A, NS4A-NS4B, NS4B-NS5A and NS5A-NS5B. The NS3/NS4A complex prevents phosphorylation of host IRF3, thus preventing the establishment of dsRNA induced antiviral state. The NS3/NS4A complex induces host amino acid transporter component SLC3A2, thus contributing to HCV propagation. NS3 RNA helicase binds to RNA and unwinds both dsDNA and dsRNA in the 3' to 5' direction, and likely resolves RNA complicated stable secondary structures in the template strand. Binds a single ATP and catalyzes the unzipping of a single base pair of dsRNA. Inhibits host antiviral proteins TBK1 and IRF3 thereby preventing the establishment of an antiviral state. Cleaves host MAVS/CARDIF thereby preventing the establishment of an antiviral state. Cleaves host TICAM1/TRIF, thereby disrupting TLR3 signaling and preventing the establishment of an antiviral state. Its function is as follows. Induces a specific membrane alteration that serves as a scaffold for the virus replication complex. This membrane alteration gives rise to the so-called ER-derived membranous web that contains the replication complex. NS4B self-interaction contributes to its function in membranous web formation. Promotes host TRIF protein degradation in a CASP8-dependent manner thereby inhibiting host TLR3-mediated interferon signaling. Disrupts the interaction between STING and TBK1 contributing to the inhibition of interferon signaling. Functionally, phosphorylated protein that is indispensable for viral replication and assembly. Both hypo- and hyperphosphorylated states are required for the viral life cycle. The hyperphosphorylated form of NS5A is an inhibitor of viral replication. Involved in RNA-binding and especially in binding to the viral genome. Zinc is essential for RNA-binding. Participates in the viral particle production as a result of its interaction with the mature viral core protein. Its interaction with host VAPB may target the viral replication complex to vesicles. Down-regulates viral IRES translation initiation. Mediates interferon resistance, presumably by interacting with and inhibiting host EIF2AK2/PKR. Prevents BIN1-induced apoptosis. Acts as a transcriptional activator of some host genes important for viral replication when localized in the nucleus. Via the interaction with host PACSIN2, modulates lipid droplet formation in order to promote virion assembly. Modulates TNFRSF21/DR6 signaling pathway for viral propagation. RNA-dependent RNA polymerase that performs primer-template recognition and RNA synthesis during viral replication. Initiates RNA transcription/replication at a flavin adenine dinucleotide (FAD), resulting in a 5'- FAD cap on viral RNAs. In this way, recognition of viral 5' RNA by host pattern recognition receptors can be bypassed, thereby evading activation of antiviral pathways. This Homo sapiens (Human) protein is Genome polyprotein.